The chain runs to 507 residues: Histidine ammonia-lyase (507 aa).

A cross-link (5-imidazolinone (Ala-Gly)) is located at residues 142 to 144 (ASG). Ser143 carries the post-translational modification 2,3-didehydroalanine (Ser).

This sequence belongs to the PAL/histidase family. Contains an active site 4-methylidene-imidazol-5-one (MIO), which is formed autocatalytically by cyclization and dehydration of residues Ala-Ser-Gly.

It is found in the cytoplasm. The catalysed reaction is L-histidine = trans-urocanate + NH4(+). It functions in the pathway amino-acid degradation; L-histidine degradation into L-glutamate; N-formimidoyl-L-glutamate from L-histidine: step 1/3. This Symbiobacterium thermophilum (strain DSM 24528 / JCM 14929 / IAM 14863 / T) protein is Histidine ammonia-lyase.